A 389-amino-acid chain; its full sequence is uncharacterized protein (389 aa).

Disordered stretches follow at residues 119–156 (SSLF…GENQ), 180–233 (PTSK…SSMG), 294–321 (SIPS…TSRT), and 362–389 (PEDM…EIKV). Residues 137-155 (SPSTINIEKNRHSSNSGEN) show a composition bias toward polar residues. Positions 190–204 (DDGDEEDDTDDEGEA) are enriched in acidic residues.

This is an uncharacterized protein from Caenorhabditis elegans.